The primary structure comprises 224 residues: A-factor barrier protein 1 (224 aa).

Positions 1-25 (MIFAPSFSLIKNILLVSFLISHSFA) are cleaved as a signal peptide. N-linked (GlcNAc...) asparagine glycosylation is found at Asn-148, Asn-181, and Asn-191. Asn-203 carries GPI-anchor amidated asparagine lipidation. A propeptide spans 204 to 224 (GAHAKSLYFPMALFGIFAVAL) (removed in mature form).

It belongs to the SRP1/TIP1 family. The GPI-anchor is attached to the protein in the endoplasmic reticulum and serves to target the protein to the cell surface. There, the glucosamine-inositol phospholipid moiety is cleaved off and the GPI-modified mannoprotein is covalently attached via its lipidless GPI glycan remnant to the 1,6-beta-glucan of the outer cell wall layer.

It localises to the secreted. The protein localises to the cell wall. The protein resides in the membrane. MATalpha-specific protein that interferes with a-factor, the pheromone secreted by MATa cells. Contributes to mating efficiency. Acts to bind and sequester a-factor rather than to degrade it, and promotes the efficient mating of MATalpha cells by keeping the a-factor concentration at the plasma membrane within the narrow range needed for accurate pheromone gradient detection. The polypeptide is A-factor barrier protein 1 (Saccharomyces cerevisiae (strain ATCC 204508 / S288c) (Baker's yeast)).